Reading from the N-terminus, the 389-residue chain is NADH-dependent butanol dehydrogenase A (389 aa).

It belongs to the iron-containing alcohol dehydrogenase family. In terms of assembly, homodimer.

It functions in the pathway alcohol metabolism; butanol biosynthesis. The protein is NADH-dependent butanol dehydrogenase A (bdhA) of Clostridium acetobutylicum (strain ATCC 824 / DSM 792 / JCM 1419 / IAM 19013 / LMG 5710 / NBRC 13948 / NRRL B-527 / VKM B-1787 / 2291 / W).